We begin with the raw amino-acid sequence, 366 residues long: Holliday junction branch migration complex subunit RuvB (366 aa).

The segment at 1–49 (MAIISSKKQPPEPNGQPNKRPESAPAAPKEKVLQPEAAIDEQGKQEESI) is disordered. The large ATPase domain (RuvB-L) stretch occupies residues 13–210 (PNGQPNKRPE…FGLIQKLRFY (198 aa)). ATP contacts are provided by residues Ile49, Arg50, Gly91, Lys94, Thr95, Thr96, 157 to 159 (EDY), Arg200, Tyr210, and Arg247. Residue Thr95 participates in Mg(2+) binding. The segment at 211–281 (EVDELSQIVL…IAAEALQLFQ (71 aa)) is small ATPAse domain (RuvB-S). Positions 284 to 366 (PCGLDWTDRR…TPPNEQLSLL (83 aa)) are head domain (RuvB-H). Positions 339 and 344 each coordinate DNA.

This sequence belongs to the RuvB family. Homohexamer. Forms an RuvA(8)-RuvB(12)-Holliday junction (HJ) complex. HJ DNA is sandwiched between 2 RuvA tetramers; dsDNA enters through RuvA and exits via RuvB. An RuvB hexamer assembles on each DNA strand where it exits the tetramer. Each RuvB hexamer is contacted by two RuvA subunits (via domain III) on 2 adjacent RuvB subunits; this complex drives branch migration. In the full resolvosome a probable DNA-RuvA(4)-RuvB(12)-RuvC(2) complex forms which resolves the HJ.

It is found in the cytoplasm. It catalyses the reaction ATP + H2O = ADP + phosphate + H(+). Its function is as follows. The RuvA-RuvB-RuvC complex processes Holliday junction (HJ) DNA during genetic recombination and DNA repair, while the RuvA-RuvB complex plays an important role in the rescue of blocked DNA replication forks via replication fork reversal (RFR). RuvA specifically binds to HJ cruciform DNA, conferring on it an open structure. The RuvB hexamer acts as an ATP-dependent pump, pulling dsDNA into and through the RuvAB complex. RuvB forms 2 homohexamers on either side of HJ DNA bound by 1 or 2 RuvA tetramers; 4 subunits per hexamer contact DNA at a time. Coordinated motions by a converter formed by DNA-disengaged RuvB subunits stimulates ATP hydrolysis and nucleotide exchange. Immobilization of the converter enables RuvB to convert the ATP-contained energy into a lever motion, pulling 2 nucleotides of DNA out of the RuvA tetramer per ATP hydrolyzed, thus driving DNA branch migration. The RuvB motors rotate together with the DNA substrate, which together with the progressing nucleotide cycle form the mechanistic basis for DNA recombination by continuous HJ branch migration. Branch migration allows RuvC to scan DNA until it finds its consensus sequence, where it cleaves and resolves cruciform DNA. In Trichormus variabilis (strain ATCC 29413 / PCC 7937) (Anabaena variabilis), this protein is Holliday junction branch migration complex subunit RuvB.